A 263-amino-acid chain; its full sequence is MRDQAPLIHPTAVIDPSAQLASDVRVGAFSLIGADVHIGAGTEVGPHCSIHGPTRIGRNNRFIGHAAIGGEPQDKKYAGERTELVIGDDNVIREFVTINRGTRGGGGITTVGNDNWMLAYTHVAHDCHVGNHCVFSNNTTLAGHVTVGDYVIISGFAGAHQFCRIGAHAFLGMGALTNGDVPPFTMVGRESLGRPRGINSEGLKRRGFDAERITAIKRAYRTLYVAGLPLTDAKLQLAEQAKSSDDVRGMLEFIEAAERSLLR.

This sequence belongs to the transferase hexapeptide repeat family. LpxA subfamily. As to quaternary structure, homotrimer.

The protein localises to the cytoplasm. The catalysed reaction is a (3R)-hydroxyacyl-[ACP] + UDP-N-acetyl-alpha-D-glucosamine = a UDP-3-O-[(3R)-3-hydroxyacyl]-N-acetyl-alpha-D-glucosamine + holo-[ACP]. It participates in glycolipid biosynthesis; lipid IV(A) biosynthesis; lipid IV(A) from (3R)-3-hydroxytetradecanoyl-[acyl-carrier-protein] and UDP-N-acetyl-alpha-D-glucosamine: step 1/6. Its function is as follows. Involved in the biosynthesis of lipid A, a phosphorylated glycolipid that anchors the lipopolysaccharide to the outer membrane of the cell. The polypeptide is Acyl-[acyl-carrier-protein]--UDP-N-acetylglucosamine O-acyltransferase (Xanthomonas oryzae pv. oryzae (strain PXO99A)).